A 640-amino-acid chain; its full sequence is Threonine--tRNA ligase (640 aa).

Residues Met1 to Thr61 form the TGS domain. The interval Asp242 to Pro533 is catalytic. Zn(2+) is bound by residues Cys333, His384, and His510.

Belongs to the class-II aminoacyl-tRNA synthetase family. In terms of assembly, homodimer. It depends on Zn(2+) as a cofactor.

It is found in the cytoplasm. It catalyses the reaction tRNA(Thr) + L-threonine + ATP = L-threonyl-tRNA(Thr) + AMP + diphosphate + H(+). Its function is as follows. Catalyzes the attachment of threonine to tRNA(Thr) in a two-step reaction: L-threonine is first activated by ATP to form Thr-AMP and then transferred to the acceptor end of tRNA(Thr). Also edits incorrectly charged L-seryl-tRNA(Thr). The polypeptide is Threonine--tRNA ligase (Pseudomonas putida (strain W619)).